The primary structure comprises 325 residues: GMP reductase (325 aa).

Cys-173 functions as the Thioimidate intermediate in the catalytic mechanism. 202-225 (IIADGGIRSHGDIAKSVRFGATMV) is an NADP(+) binding site.

This sequence belongs to the IMPDH/GMPR family. GuaC type 2 subfamily.

It carries out the reaction IMP + NH4(+) + NADP(+) = GMP + NADPH + 2 H(+). Functionally, catalyzes the irreversible NADPH-dependent deamination of GMP to IMP. It functions in the conversion of nucleobase, nucleoside and nucleotide derivatives of G to A nucleotides, and in maintaining the intracellular balance of A and G nucleotides. The polypeptide is GMP reductase (Acidovorax ebreus (strain TPSY) (Diaphorobacter sp. (strain TPSY))).